A 346-amino-acid polypeptide reads, in one-letter code: D-alanine--D-alanine ligase (346 aa).

The region spanning 133 to 327 (KLYAKSVGVK…TLADQIPLEK (195 aa)) is the ATP-grasp domain. Residue 159-211 (LRFPCIIKPARLGSSIGISIVKDEKDLEYAKDVGFEFDNDLVVEEFKNNIKEY) participates in ATP binding. Mg(2+) is bound by residues Asp284, Glu296, and Asn298.

This sequence belongs to the D-alanine--D-alanine ligase family. Requires Mg(2+) as cofactor. The cofactor is Mn(2+).

Its subcellular location is the cytoplasm. The catalysed reaction is 2 D-alanine + ATP = D-alanyl-D-alanine + ADP + phosphate + H(+). It participates in cell wall biogenesis; peptidoglycan biosynthesis. Functionally, cell wall formation. The polypeptide is D-alanine--D-alanine ligase (Campylobacter jejuni subsp. doylei (strain ATCC BAA-1458 / RM4099 / 269.97)).